The primary structure comprises 402 residues: Acetylornithine aminotransferase (402 aa).

Residues 106-107 (GA) and F132 each bind pyridoxal 5'-phosphate. R135 serves as a coordination point for N(2)-acetyl-L-ornithine. Residue 217 to 220 (DEVQ) coordinates pyridoxal 5'-phosphate. Residue K247 is modified to N6-(pyridoxal phosphate)lysine. Residue T275 coordinates N(2)-acetyl-L-ornithine. T276 provides a ligand contact to pyridoxal 5'-phosphate.

It belongs to the class-III pyridoxal-phosphate-dependent aminotransferase family. ArgD subfamily. Homodimer. Requires pyridoxal 5'-phosphate as cofactor.

It localises to the cytoplasm. The enzyme catalyses N(2)-acetyl-L-ornithine + 2-oxoglutarate = N-acetyl-L-glutamate 5-semialdehyde + L-glutamate. The protein operates within amino-acid biosynthesis; L-arginine biosynthesis; N(2)-acetyl-L-ornithine from L-glutamate: step 4/4. This chain is Acetylornithine aminotransferase, found in Streptomyces coelicolor (strain ATCC BAA-471 / A3(2) / M145).